Consider the following 393-residue polypeptide: Branched-chain-amino-acid aminotransferase, mitochondrial (393 aa).

A mitochondrion-targeting transit peptide spans 1-27 (MAAATLGQVWARKLLPVPWLLCGSKRC). Tyrosine 169 is a substrate binding site. An N6-(pyridoxal phosphate)lysine modification is found at lysine 230. Lysine 322 carries the post-translational modification N6-acetyllysine.

This sequence belongs to the class-IV pyridoxal-phosphate-dependent aminotransferase family. In terms of assembly, homodimer. Requires pyridoxal 5'-phosphate as cofactor.

Its subcellular location is the mitochondrion. It carries out the reaction L-leucine + 2-oxoglutarate = 4-methyl-2-oxopentanoate + L-glutamate. It catalyses the reaction L-isoleucine + 2-oxoglutarate = (S)-3-methyl-2-oxopentanoate + L-glutamate. The enzyme catalyses L-valine + 2-oxoglutarate = 3-methyl-2-oxobutanoate + L-glutamate. In terms of biological role, catalyzes the first reaction in the catabolism of the essential branched chain amino acids leucine, isoleucine, and valine. May also function as a transporter of branched chain alpha-keto acids. The protein is Branched-chain-amino-acid aminotransferase, mitochondrial (Bcat2) of Mus musculus (Mouse).